We begin with the raw amino-acid sequence, 875 residues long: Outer membrane usher protein FocD (875 aa).

A signal peptide spans 1–38 (MFFGDGGQLLSDKSLTGSAGGGNNRMKFNILPLAFFIG). Cys-852 and Cys-874 are joined by a disulfide.

It belongs to the fimbrial export usher family.

The protein localises to the cell outer membrane. In terms of biological role, involved in the export and assembly of the F1C fimbriae subunits across the outer membrane. The protein is Outer membrane usher protein FocD (focD) of Escherichia coli.